The primary structure comprises 750 residues: Sulfhydryl oxidase 1 (750 aa).

A signal peptide spans 1–32 (MGRCNRGSGPPSSLLLLLLLLLWLLAVPGASA). Positions 39–159 (YSPSDPLTLL…RERLIDALES (121 aa)) constitute a Thioredoxin domain. Catalysis depends on nucleophile residues cysteine 73 and cysteine 76. 2 disulfide bridges follow: cysteine 73-cysteine 76 and cysteine 104-cysteine 113. N-linked (GlcNAc...) asparagine glycans are attached at residues asparagine 133 and asparagine 246. Cysteines 396 and 408 form a disulfide. Positions 399–506 (SEPHFRGFPC…EDPQFPKVQW (108 aa)) constitute an ERV/ALR sulfhydryl oxidase domain. FAD contacts are provided by arginine 404, tryptophan 411, and histidine 415. At serine 429 the chain carries Phosphoserine. Cysteines 452 and 455 form a disulfide. FAD contacts are provided by residues aspartate 454, histidine 458, 481–488 (WSSHNRVN), lysine 503, and tryptophan 506. Cysteine 512 and cysteine 515 are joined by a disulfide. An N-linked (GlcNAc...) asparagine glycan is attached at asparagine 578. The interval 578–645 (NSTVDLGKPE…REQPRGQWHL (68 aa)) is disordered. The segment covering 624-639 (PPEHMAELQTNEREQP) has biased composition (basic and acidic residues). The helical transmembrane segment at 713–733 (ISLCVGLYSLSFMGLLAMYAY) threads the bilayer.

This sequence belongs to the quiescin-sulfhydryl oxidase (QSOX) family. As to quaternary structure, monomer. FAD serves as cofactor. N-glycosylated. O-glycosylated on Thr and Ser residues.

The protein resides in the golgi apparatus membrane. The protein localises to the secreted. It carries out the reaction 2 R'C(R)SH + O2 = R'C(R)S-S(R)CR' + H2O2. Functionally, catalyzes the oxidation of sulfhydryl groups in peptide and protein thiols to disulfides with the reduction of oxygen to hydrogen peroxide. Plays a role in disulfide bond formation in a variety of extracellular proteins. In fibroblasts, required for normal incorporation of laminin into the extracellular matrix, and thereby for normal cell-cell adhesion and cell migration. In Pongo abelii (Sumatran orangutan), this protein is Sulfhydryl oxidase 1 (QSOX1).